The chain runs to 933 residues: Myocardin (933 aa).

An MEF2C-binding motif is present at residues 12–27 (IRSKFRSVLQLRLQQR). RPEL repeat units follow at residues 18-43 (SVLQ…PPLR), 62-87 (DTLK…QASS), and 106-131 (DDLN…PVDC). The tract at residues 153-205 (FEEDSSSDGLSPDQTRSEDLPGSAGSPLDTKAAETPLAGPRGTVQDLTLGSEN) is HDAC5-binding. 2 disordered regions span residues 154–282 (EEDS…PPPM) and 324–365 (NEQM…GPLP). Positions 210–220 (SAPQSGNQSDL) are enriched in polar residues. The segment covering 248 to 265 (NRHKKPKDPKPKVKKLKY) has biased composition (basic residues). Low complexity predominate over residues 330-346 (NPNSSSAPLSSTPLSPA). Polar residues predominate over residues 347–357 (KNSFSGQTGVS). The SAP domain occupies 368-402 (LDDLKVSELRQQLRIRGLPVSGTKTALMDRLRPFQ). Phosphoserine; by GSK3-beta occurs at positions 445, 449, 453, and 457. Residues 515–550 (LVEKQKVINELTWKLQQEQRQVEELRMQLQKQKRGT) are a coiled coil. Residues 568–613 (DAGSSCPFAPLPRAVKRQSNSSEEQPAAGDAARLRPLGNTHCAESS) form a disordered region. Phosphoserine; by GSK3-beta is present on residues Ser-621, Ser-625, Ser-629, and Ser-633. 2 disordered regions span residues 630-672 (PQHS…VSSP) and 760-794 (PKIP…FDHY). The tract at residues 712–933 (ITQPPSYEDA…SPMDLHLQQW (222 aa)) is required for interaction with and ubiquitination by STUB1. Phosphoserine; by MAPK1 and MAPK3 is present on residues Ser-810, Ser-857, and Ser-864. Phosphothreonine; by MAPK1 and MAPK3 is present on Thr-891.

Homodimer. Interacts with MLLT7/FOXO4. Interacts with SRF, its association does not depend on specific DNA sequences for ternary complex formation. Interacts (via C-terminal) with EP300 (via the CREB-binding domain). Interacts with HDAC4 and HDAC5. Interacts with MEF2C. Interacts (via C-terminus) with STUB1/CHIP. Interacts with PURB. In terms of processing, ubiquitinated; by STUB1/CHIP at the C-terminus, leading to its degradation by the proteasome. Phosphorylation by GSK3B is required for STUB1/CHIP-mediated ubiquitination. Phosphorylation negatively regulates the intrinsic myocardin transcriptional activity. Phosphorylated; by GSK3B. Expressed in the heart and in smooth muscle cells-containing tissues (aorta, pulmonary vein, lung), but is not detectable in skeletal muscle, liver, kidney and spleen.

It is found in the nucleus. Its function is as follows. Smooth muscle cells (SM) and cardiac muscle cells-specific transcriptional factor which uses the canonical single or multiple CArG boxes DNA sequence. Acts as a cofactor of serum response factor (SRF) with the potential to modulate SRF-target genes. Plays a crucial role in cardiogenesis, urinary bladder development, and differentiation of the smooth muscle cell lineage (myogenesis). Positively regulates the transcription of genes involved in vascular smooth muscle contraction. This chain is Myocardin (MYOCD), found in Sus scrofa (Pig).